The following is a 154-amino-acid chain: Myoglobin (154 aa).

Positions Val-2–Lys-148 constitute a Globin domain. His-65 is a nitrite binding site. His-65 provides a ligand contact to O2. Thr-68 bears the Phosphothreonine mark. His-94 contacts heme b.

The protein belongs to the globin family. Monomeric.

The protein localises to the cytoplasm. Its subcellular location is the sarcoplasm. It catalyses the reaction Fe(III)-heme b-[protein] + nitric oxide + H2O = Fe(II)-heme b-[protein] + nitrite + 2 H(+). The catalysed reaction is H2O2 + AH2 = A + 2 H2O. Its function is as follows. Monomeric heme protein which primary function is to store oxygen and facilitate its diffusion within muscle tissues. Reversibly binds oxygen through a pentacoordinated heme iron and enables its timely and efficient release as needed during periods of heightened demand. Depending on the oxidative conditions of tissues and cells, and in addition to its ability to bind oxygen, it also has a nitrite reductase activity whereby it regulates the production of bioactive nitric oxide. Under stress conditions, like hypoxia and anoxia, it also protects cells against reactive oxygen species thanks to its pseudoperoxidase activity. The protein is Myoglobin (MB) of Balaenoptera physalus (Fin whale).